We begin with the raw amino-acid sequence, 650 residues long: 1-deoxy-D-xylulose-5-phosphate synthase (650 aa).

Thiamine diphosphate-binding positions include H73 and 113-115; that span reads SHA. Residue D145 coordinates Mg(2+). Thiamine diphosphate contacts are provided by residues 146–147, N175, Y287, and E369; that span reads GA. N175 contributes to the Mg(2+) binding site. The tract at residues 629–650 is disordered; that stretch reads SARPLPEDAERVPMRAEDDEQA. A compositionally biased stretch (basic and acidic residues) spans 633 to 644; sequence LPEDAERVPMRA.

The protein belongs to the transketolase family. DXPS subfamily. In terms of assembly, homodimer. It depends on Mg(2+) as a cofactor. Thiamine diphosphate serves as cofactor.

The enzyme catalyses D-glyceraldehyde 3-phosphate + pyruvate + H(+) = 1-deoxy-D-xylulose 5-phosphate + CO2. It participates in metabolic intermediate biosynthesis; 1-deoxy-D-xylulose 5-phosphate biosynthesis; 1-deoxy-D-xylulose 5-phosphate from D-glyceraldehyde 3-phosphate and pyruvate: step 1/1. Its function is as follows. Catalyzes the acyloin condensation reaction between C atoms 2 and 3 of pyruvate and glyceraldehyde 3-phosphate to yield 1-deoxy-D-xylulose-5-phosphate (DXP). The sequence is that of 1-deoxy-D-xylulose-5-phosphate synthase from Clavibacter sepedonicus (Clavibacter michiganensis subsp. sepedonicus).